A 904-amino-acid polypeptide reads, in one-letter code: Eukaryotic translation initiation factor 3 subunit C (904 aa).

Disordered regions lie at residues 1–38 (MSRF…EEED) and 156–290 (FRES…TSEK). The span at 22–32 (IQRQTAPQFTF) shows a compositional bias: polar residues. A compositionally biased stretch (acidic residues) spans 161–183 (DAADDEDEEEEKKEEEESDDEEA). Over residues 194 to 206 (FKKDTVEKVKVEK) the composition is skewed to basic and acidic residues. Over residues 207 to 232 (DDDDSDDSIDWGQDSDSDESSSEEEA) the composition is skewed to acidic residues. Over residues 237–247 (IRERFLKRPEK) the composition is skewed to basic and acidic residues. Positions 257 to 272 (KEKKKTKETKDSRKKK) are enriched in basic residues. Residues 636–812 (FHMHINLELL…ETVVLHRSEP (177 aa)) form the PCI domain. Positions 847 to 904 (RGGNQGYNRDRQNYRNQNQNRENWNNNRRQDRGNRNRNQNRDREQREQHRVEFEEKAE) are disordered. Low complexity predominate over residues 860–873 (YRNQNQNRENWNNN). Basic and acidic residues predominate over residues 874 to 904 (RRQDRGNRNRNQNRDREQREQHRVEFEEKAE).

The protein belongs to the eIF-3 subunit C family. As to quaternary structure, component of the eukaryotic translation initiation factor 3 (eIF-3) complex.

The protein localises to the cytoplasm. Functionally, component of the eukaryotic translation initiation factor 3 (eIF-3) complex, which is involved in protein synthesis of a specialized repertoire of mRNAs and, together with other initiation factors, stimulates binding of mRNA and methionyl-tRNAi to the 40S ribosome. The eIF-3 complex specifically targets and initiates translation of a subset of mRNAs involved in cell proliferation. This Culex quinquefasciatus (Southern house mosquito) protein is Eukaryotic translation initiation factor 3 subunit C.